Here is a 213-residue protein sequence, read N- to C-terminus: Large ribosomal subunit protein uL3 (213 aa).

The tract at residues 135–155 is disordered; it reads THGSKNHRLPGSTGAGTTPGR.

Belongs to the universal ribosomal protein uL3 family. Part of the 50S ribosomal subunit. Forms a cluster with proteins L14 and L19.

One of the primary rRNA binding proteins, it binds directly near the 3'-end of the 23S rRNA, where it nucleates assembly of the 50S subunit. This is Large ribosomal subunit protein uL3 from Synechocystis sp. (strain ATCC 27184 / PCC 6803 / Kazusa).